A 148-amino-acid chain; its full sequence is Protein F15 (148 aa).

It belongs to the poxviridae F15 protein family.

This chain is Protein F15, found in Fowlpox virus (strain NVSL) (FPV).